Here is a 254-residue protein sequence, read N- to C-terminus: Wall-associated protein (254 aa).

Residues 25-46 (DRVEPKEEPPKVPQAPKRDLKP) are disordered.

Its subcellular location is the secreted. It localises to the cell wall. The sequence is that of Wall-associated protein (wapA') from Geobacillus stearothermophilus (Bacillus stearothermophilus).